We begin with the raw amino-acid sequence, 240 residues long: MARRPRTIGPSASDPGFSPQHALELVRSAIPPVHPAGRPFVGAGLALALAGRRHRWLRRAGLLAAGACAGFFRHPPRVPPTRPGAIVAPADGEICVIDVATPPAELSMGDVALPRVSIFLSLLDAHVQRAPVSGEVIDVQHRPGRFGSADLAAASTENERTSLRIRTPGGAEVVAVQVAGLLARRIICDAHVGDKLSIGDTYGLIRFGSRLDTYLPAGAQPLVTVGQRAIAGETVLAELP.

Ser-209 (schiff-base intermediate with substrate; via pyruvic acid) is an active-site residue. Ser-209 carries the post-translational modification Pyruvic acid (Ser); by autocatalysis.

Belongs to the phosphatidylserine decarboxylase family. PSD-A subfamily. As to quaternary structure, heterodimer of a large membrane-associated beta subunit and a small pyruvoyl-containing alpha subunit. Requires pyruvate as cofactor. Post-translationally, is synthesized initially as an inactive proenzyme. Formation of the active enzyme involves a self-maturation process in which the active site pyruvoyl group is generated from an internal serine residue via an autocatalytic post-translational modification. Two non-identical subunits are generated from the proenzyme in this reaction, and the pyruvate is formed at the N-terminus of the alpha chain, which is derived from the carboxyl end of the proenzyme. The post-translation cleavage follows an unusual pathway, termed non-hydrolytic serinolysis, in which the side chain hydroxyl group of the serine supplies its oxygen atom to form the C-terminus of the beta chain, while the remainder of the serine residue undergoes an oxidative deamination to produce ammonia and the pyruvoyl prosthetic group on the alpha chain.

It is found in the cell membrane. It carries out the reaction a 1,2-diacyl-sn-glycero-3-phospho-L-serine + H(+) = a 1,2-diacyl-sn-glycero-3-phosphoethanolamine + CO2. It functions in the pathway phospholipid metabolism; phosphatidylethanolamine biosynthesis; phosphatidylethanolamine from CDP-diacylglycerol: step 2/2. Catalyzes the formation of phosphatidylethanolamine (PtdEtn) from phosphatidylserine (PtdSer). This Mycobacterium avium (strain 104) protein is Phosphatidylserine decarboxylase proenzyme.